The following is a 207-amino-acid chain: Hydrogenase expression/formation protein HoxM (207 aa).

Residues glutamate 19, aspartate 65, and histidine 96 each coordinate Ni(2+).

It belongs to the peptidase A31 family.

In terms of biological role, not known. Could be involved in the processing of hydrogenase. The chain is Hydrogenase expression/formation protein HoxM (hoxM) from Azotobacter vinelandii.